The sequence spans 413 residues: Cardiolipin synthase B (413 aa).

PLD phosphodiesterase domains are found at residues 108–135 (IFRR…SAEH) and 285–312 (RRRP…DPLS). Active-site residues include His113, Lys115, Asp120, His290, Lys292, and Asp297. A disordered region spans residues 388–413 (AQVPPPAQPEMETQDRVDPENTGVKP).

Belongs to the phospholipase D family. Cardiolipin synthase subfamily. ClsB sub-subfamily.

The protein resides in the cell membrane. The enzyme catalyses 2 a 1,2-diacyl-sn-glycero-3-phospho-(1'-sn-glycerol) = a cardiolipin + glycerol. Catalyzes the phosphatidyl group transfer from one phosphatidylglycerol molecule to another to form cardiolipin (CL) (diphosphatidylglycerol) and glycerol. The polypeptide is Cardiolipin synthase B (Salmonella typhimurium (strain LT2 / SGSC1412 / ATCC 700720)).